The following is a 322-amino-acid chain: NADH-quinone oxidoreductase subunit H (322 aa).

Transmembrane regions (helical) follow at residues 15 to 35 (FFKV…LSIV), 50 to 69 (NRVG…KILF), 81 to 101 (FIFV…IPII), 114 to 134 (IGIL…LFAG), 149 to 169 (ACVQ…GVVA), 186 to 206 (IWNV…GLAV), 237 to 257 (FFIG…TLFF), 265 to 285 (IPGC…FILI), and 302 to 322 (WKFC…LILV).

Belongs to the complex I subunit 1 family. As to quaternary structure, NDH-1 is composed of 13 different subunits. Subunits NuoA, H, J, K, L, M, N constitute the membrane sector of the complex.

The protein localises to the cell membrane. The catalysed reaction is a quinone + NADH + 5 H(+)(in) = a quinol + NAD(+) + 4 H(+)(out). In terms of biological role, NDH-1 shuttles electrons from NADH, via FMN and iron-sulfur (Fe-S) centers, to quinones in the respiratory chain. The immediate electron acceptor for the enzyme in this species is believed to be ubiquinone. Couples the redox reaction to proton translocation (for every two electrons transferred, four hydrogen ions are translocated across the cytoplasmic membrane), and thus conserves the redox energy in a proton gradient. This subunit may bind ubiquinone. The chain is NADH-quinone oxidoreductase subunit H from Buchnera aphidicola subsp. Acyrthosiphon pisum (strain 5A).